A 350-amino-acid chain; its full sequence is Sulfate-binding protein (350 aa).

Residues 1-40 (MKTAWTRRSFLQSAALATATVITIAACGGNNQSSSGGSGQ) form the signal peptide.

Belongs to the prokaryotic sulfate-binding protein family.

It localises to the periplasm. This protein specifically binds sulfate and is involved in its transmembrane transport. The chain is Sulfate-binding protein (sbpA) from Synechococcus elongatus (strain ATCC 33912 / PCC 7942 / FACHB-805) (Anacystis nidulans R2).